The primary structure comprises 154 residues: MAL-like protein (154 aa).

4 helical membrane-spanning segments follow: residues 24 to 44, 61 to 81, 99 to 119, and 131 to 151; these read LFLT…FWVW, VLYV…SYLF, GTTG…TIIS, and VAAS…AFSI. Residues 24–154 form the MARVEL domain; the sequence is LFLTIPFAFF…ILHAFSIYYH (131 aa).

It belongs to the MAL family.

Its subcellular location is the membrane. This is MAL-like protein (Mall) from Mus musculus (Mouse).